We begin with the raw amino-acid sequence, 208 residues long: Protein late bloomer (208 aa).

4 helical membrane passes run 10 to 30 (IASI…IGWI), 41 to 61 (FVIA…LGIF), 67 to 87 (SVVL…LQIV), and 174 to 194 (FIIV…LAVF).

It belongs to the tetraspanin (TM4SF) family. In terms of tissue distribution, transiently expressed on motor axons, growth cones and terminal arbors.

The protein localises to the membrane. It is found in the synapse. Functionally, facilitates synapse formation. In Drosophila melanogaster (Fruit fly), this protein is Protein late bloomer (lbm).